The primary structure comprises 113 residues: MNDIQIPIIFTDAAAKKVKSLIEGEDNPNLRLRVYITGGGCSGFQYGFTFDDQVNDGDLTIENQNVGLVVDPMSLQYLIGGTVDYTEGLDGSRFVVNNPNATSTCGCGSSFSI.

Residues Cys41, Cys105, and Cys107 each coordinate iron-sulfur cluster.

Belongs to the HesB/IscA family. In terms of assembly, homodimer. The cofactor is iron-sulfur cluster.

Required for insertion of 4Fe-4S clusters for at least IspG. The chain is Iron-sulfur cluster insertion protein ErpA from Actinobacillus pleuropneumoniae serotype 3 (strain JL03).